A 468-amino-acid polypeptide reads, in one-letter code: ATP synthase subunit beta (468 aa).

Residue 148 to 155 participates in ATP binding; sequence GGAGVGKT.

This sequence belongs to the ATPase alpha/beta chains family. In terms of assembly, F-type ATPases have 2 components, CF(1) - the catalytic core - and CF(0) - the membrane proton channel. CF(1) has five subunits: alpha(3), beta(3), gamma(1), delta(1), epsilon(1). CF(0) has three main subunits: a(1), b(2) and c(9-12). The alpha and beta chains form an alternating ring which encloses part of the gamma chain. CF(1) is attached to CF(0) by a central stalk formed by the gamma and epsilon chains, while a peripheral stalk is formed by the delta and b chains.

The protein resides in the cell inner membrane. The catalysed reaction is ATP + H2O + 4 H(+)(in) = ADP + phosphate + 5 H(+)(out). Functionally, produces ATP from ADP in the presence of a proton gradient across the membrane. The catalytic sites are hosted primarily by the beta subunits. The protein is ATP synthase subunit beta of Xanthomonas axonopodis pv. citri (strain 306).